A 561-amino-acid polypeptide reads, in one-letter code: Putative transport protein YbjL (561 aa).

The next 5 membrane-spanning stretches (helical) occupy residues 8-28, 32-52, 66-86, 94-114, and 158-178; these read LLNG…LCLG, LGSI…LLGQ, FMLF…SIFF, MLAL…GKLF, and NLSL…IVGA. RCK C-terminal domains follow at residues 200–288 and 292–373; these read RGLD…SFRN and VFDR…RIGF. The next 6 membrane-spanning stretches (helical) occupy residues 383–403, 406–426, 451–471, 475–495, 503–523, and 540–560; these read LLAF…TFQF, FSFG…LGFM, VFMA…LGAI, MLIA…LFGA, ALLF…EIIS, and AIAN…CPGL.

It belongs to the AAE transporter (TC 2.A.81) family. YbjL subfamily.

Its subcellular location is the cell membrane. The chain is Putative transport protein YbjL from Shigella dysenteriae serotype 1 (strain Sd197).